A 428-amino-acid polypeptide reads, in one-letter code: MEILMASSNLIKQLQERGLVAQVTDEDALAERLAQGPIALYCGFDPTADSLHLGHLVPLLCLKRFQQAGHKPVALVGGATGLIGDPSFKAAERKLNTEETVQEWVAKIRKQVAPFLDFDCGENSAIAANNYDWFGSMNVLTFLRDIGKHFSVNQMINKEAVKQRLNRDDQGISFTEFSYNLLQGYDFACLNKLHGVALQIGGSDQWGNITSGIDLTRRLHQNQVFGLTVPLITKADGTKFGKTEGGAVWLDPKKTSPYKFYQFWINTADADVYRFLKFFTFMDIEEINALEEEDKNSGKAPRAQYVLAEQVTRLVHGEEGLIAAKRITESLFNGSLGELSEADFEQLAQDGVPMIELEKGTDLMQALVDAELQPSRGQARKTIASNAVTINGEKQSDPEYIFNDEDRLFGRYTLLRRGKKNYCLICWK.

Tyr-41 is a binding site for L-tyrosine. The short motif at 46-55 (PTADSLHLGH) is the 'HIGH' region element. L-tyrosine-binding residues include Tyr-179 and Gln-183. Positions 239-243 (KFGKT) match the 'KMSKS' region motif. Lys-242 is a binding site for ATP. Positions 361–418 (TDLMQALVDAELQPSRGQARKTIASNAVTINGEKQSDPEYIFNDEDRLFGRYTLLRRG) constitute an S4 RNA-binding domain.

It belongs to the class-I aminoacyl-tRNA synthetase family. TyrS type 1 subfamily. As to quaternary structure, homodimer.

The protein localises to the cytoplasm. It carries out the reaction tRNA(Tyr) + L-tyrosine + ATP = L-tyrosyl-tRNA(Tyr) + AMP + diphosphate + H(+). Its function is as follows. Catalyzes the attachment of tyrosine to tRNA(Tyr) in a two-step reaction: tyrosine is first activated by ATP to form Tyr-AMP and then transferred to the acceptor end of tRNA(Tyr). The protein is Tyrosine--tRNA ligase of Salmonella arizonae (strain ATCC BAA-731 / CDC346-86 / RSK2980).